Consider the following 148-residue polypeptide: Nucleoside diphosphate kinase (148 aa).

6 residues coordinate ATP: Lys9, Phe57, Arg85, Thr91, Arg102, and Asn112. At Thr91 the chain carries Phosphothreonine. Catalysis depends on His115, which acts as the Pros-phosphohistidine intermediate. The residue at position 122 (Ser122) is a Phosphoserine.

The protein belongs to the NDK family. In terms of assembly, homotetramer. It depends on Mg(2+) as a cofactor.

Its subcellular location is the cytoplasm. It catalyses the reaction a 2'-deoxyribonucleoside 5'-diphosphate + ATP = a 2'-deoxyribonucleoside 5'-triphosphate + ADP. It carries out the reaction a ribonucleoside 5'-diphosphate + ATP = a ribonucleoside 5'-triphosphate + ADP. Its function is as follows. Major role in the synthesis of nucleoside triphosphates other than ATP. The ATP gamma phosphate is transferred to the NDP beta phosphate via a ping-pong mechanism, using a phosphorylated active-site intermediate. The chain is Nucleoside diphosphate kinase from Bacillus anthracis.